Here is a 303-residue protein sequence, read N- to C-terminus: Major fimbrium anchoring subunit FimB (303 aa).

The N-terminal stretch at 1-22 (MNDAKKYIVSVLILLVAGMFGG) is a signal peptide. Cys23 carries N-palmitoyl cysteine lipidation. Cys23 is lipidated: S-diacylglycerol cysteine.

It belongs to the bacteroidetes fimbrillin superfamily. FimB/Mfa2 family. FimB is not part of the fimbrium itself, but anchors the fimbrium in the outer membrane. Linear, head-to-tail oligomerization of fimbrial subunits mediates assembly of the fimbrium stalk, while the minor components FimC, FimD and FimE probably form the fimbrium tip. The anchoring subunit FimB limits fimbrium length and is important for solid fimbrium attachment to the outer membrane. In its absence, the major fimbriae become very long and are easily detached from the membrane.

The protein resides in the cell outer membrane. In terms of biological role, anchoring subunit of the major fimbriae. Regulates fimbrial length. These filamentous pili are attached to the cell surface; they mediate biofilm formation, adhesion onto host cells and onto other bacteria that are part of the oral microbiome. Fimbriae of P.gingivalis are major virulence factors. The sequence is that of Major fimbrium anchoring subunit FimB from Porphyromonas gingivalis (strain ATCC 33277 / DSM 20709 / CIP 103683 / JCM 12257 / NCTC 11834 / 2561).